A 402-amino-acid polypeptide reads, in one-letter code: Multidrug resistance protein MdtH (402 aa).

The Cytoplasmic portion of the chain corresponds to 1-12 (MSRVSQARNLGK). Residues 13-33 (YFLLIDNMLVVLGFFVVFPLI) traverse the membrane as a helical segment. The Periplasmic segment spans residues 34 to 98 (SIRFVDQMGW…GFATMGIAHE (65 aa)). Residues 99 to 116 (PWLLWFSCLLSGLGGTLF) traverse the membrane as a helical segment. At 117-138 (DPPRSALVVKLIRPQQRGRFFS) the chain is on the cytoplasmic side. The helical transmembrane segment at 139–159 (LLMMQDSAGAVIGALLGSWLL) threads the bilayer. Residues 160 to 164 (QYDFR) are Periplasmic-facing. The helical transmembrane segment at 165 to 185 (LVCATGAVLFVLCAAFNAWLL) threads the bilayer. At 186–213 (PAWKLSTVRTPVREGMTRVMRDKRFVTY) the chain is on the cytoplasmic side. A helical transmembrane segment spans residues 214 to 234 (VLTLAGYYMLAVQVMLMLPIM). At 235–243 (VNDVAGAPS) the chain is on the periplasmic side. A helical transmembrane segment spans residues 244–264 (AVKWMYAIEACLSLTLLYPIA). The Cytoplasmic portion of the chain corresponds to 265-276 (RWSEKHFRLEHR). Residues 277–297 (LMAGLLIMSLSMMPVGMVSGL) form a helical membrane-spanning segment. Topologically, residues 298–299 (QQ) are periplasmic. Residues 300–320 (LFTLICLFYIGSIIAEPARET) traverse the membrane as a helical segment. The Cytoplasmic segment spans residues 321–339 (LSASLADARARGSYMGFSR). Residues 340–360 (LGLAIGGAIGYIGGGWLFDLG) form a helical membrane-spanning segment. The Periplasmic segment spans residues 361 to 367 (KSVHQPE). Residues 368–388 (LPWMMLGIIGIFTFLALGWQF) form a helical membrane-spanning segment. The Cytoplasmic portion of the chain corresponds to 389–402 (SQKRAARRLLERDA).

The protein belongs to the major facilitator superfamily. DHA1 family. MdtH (TC 2.A.1.2.21) subfamily.

The protein localises to the cell inner membrane. In terms of biological role, confers resistance to norfloxacin and enoxacin. This Escherichia coli O157:H7 protein is Multidrug resistance protein MdtH.